The following is a 618-amino-acid chain: Medium-chain acyl-CoA ligase ACSF2, mitochondrial (618 aa).

The transit peptide at 1–44 (MRATAAYVGMLRLGRMCAGSPGVLGARAALSRSWQEARLQAVRF) directs the protein to the mitochondrion. N6-acetyllysine is present on lysine 182. Lysine 185 bears the N6-acetyllysine; alternate mark. The residue at position 185 (lysine 185) is an N6-succinyllysine; alternate. ATP is bound at residue 266–274 (TSGTTGSPK). 2 positions are modified to N6-acetyllysine: lysine 343 and lysine 401. An N6-succinyllysine modification is found at lysine 481. Positions 496 and 511 each coordinate ATP. N6-acetyllysine is present on lysine 513. 2 positions are modified to N6-acetyllysine; alternate: lysine 547 and lysine 573. N6-succinyllysine; alternate occurs at positions 547 and 573. ATP is bound at residue lysine 602. N6-succinyllysine is present on lysine 602.

This sequence belongs to the ATP-dependent AMP-binding enzyme family.

Its subcellular location is the mitochondrion. The catalysed reaction is a medium-chain fatty acid + ATP + CoA = a medium-chain fatty acyl-CoA + AMP + diphosphate. The enzyme catalyses octanoate + ATP + CoA = octanoyl-CoA + AMP + diphosphate. Acyl-CoA synthases catalyze the initial reaction in fatty acid metabolism, by forming a thioester with CoA. Has some preference toward medium-chain substrates. Plays a role in adipocyte differentiation. The polypeptide is Medium-chain acyl-CoA ligase ACSF2, mitochondrial (Macaca fascicularis (Crab-eating macaque)).